The following is a 236-amino-acid chain: Probable 2-phosphosulfolactate phosphatase (236 aa).

The protein belongs to the ComB family. It depends on Mg(2+) as a cofactor.

It carries out the reaction (2R)-O-phospho-3-sulfolactate + H2O = (2R)-3-sulfolactate + phosphate. The chain is Probable 2-phosphosulfolactate phosphatase from Gloeobacter violaceus (strain ATCC 29082 / PCC 7421).